The following is a 699-amino-acid chain: MQKSRDIKRTGVYRVSGNIGDLQLELKLRHISEWLPVPKFEYAGAQSTNAYGDHYPGSEEDIWQDCYIHVPQGDDSCGGKTGLGYNCSYYNVGIGYTGRRRRSPISQHEGEMEKDKNEGEITDLESQSNRSWSILSDNSRPPAGDLFYKRNKELCNGAIATIRISWQQKHFSQAELEQYINNPGSCASKLQRRYHRWALETLKLQQRYLRKLENLEDAETVEDPEPITIRRRIRKPKAKQRGCSAAAHPTITSLSSANMSEVSILDDPNFAARTCLIHTLLDNDSESLMPAEASEFHKKGYQLMYIYADLQQDTLLVSIRYDPEQGLLYVYPDFSSSAQDLDYVIQIERNNDCRQLYAFGFENVTPLEAYDDDGFSEEADGEDEQELGDGLPIEEDLPEEASAEEILEFYRRRREAASERRSLLQFEMPPKRMKRVSLLLELQEGQNFENPNIHVRYYLKAPANTFYEGTPGVDTMQGATATCRNAGDWRSAHLGHCWQVTLLLEEQHHPADLLHLYFEVISIDSWQRERCEGYAHYAIPLTSALPTDSIRLQCIRPLGNWLDALNRYFIGGRQLFDFESFFDVHRQSEMHSRLNFNSDRPMTTTGTLSLRLQKLQQRQIDTSDQFHHHFHLELGNDSSDDGDSNDDDVRSSSNPDTSRATTLDEVMAAFVEARKRIELLLGNSSETASPSSAYYQAEF.

Disordered stretches follow at residues 101 to 121 (RRSP…EGEI) and 373 to 396 (DGFS…IEED). Over residues 108–119 (HEGEMEKDKNEG) the composition is skewed to basic and acidic residues. In terms of domain architecture, C2 B9-type spans 434-560 (KRVSLLLELQ…RLQCIRPLGN (127 aa)). A disordered region spans residues 632-661 (LELGNDSSDDGDSNDDDVRSSSNPDTSRAT).

As to quaternary structure, probable component of the tectonic-like complex (also named MKS complex), composed of B9d1, B9d2, Cc2d2a, Mks1 and tctn. As to expression, expressed in chordotonal neurons in the antennae (at protein level). Expressed in spermatids (at protein level).

It localises to the cytoplasm. The protein localises to the cytoskeleton. It is found in the cilium basal body. The protein resides in the microtubule organizing center. Its subcellular location is the centrosome. It localises to the centriole. Its function is as follows. Probable component of the tectonic-like complex (also named MKS complex), a complex localized at the transition zone of primary cilia. Required for ciliary structure and function. This Drosophila melanogaster (Fruit fly) protein is Tectonic-like complex member Mks1.